Consider the following 418-residue polypeptide: Putative competence-damage inducible protein (418 aa).

Belongs to the CinA family.

This chain is Putative competence-damage inducible protein, found in Streptococcus pneumoniae serotype 2 (strain D39 / NCTC 7466).